An 84-amino-acid chain; its full sequence is Large ribosomal subunit protein bL27 (84 aa).

The interval 1 to 21 (MAHKKGASSTRNGRDSNAQRL) is disordered. A compositionally biased stretch (polar residues) spans 7-19 (ASSTRNGRDSNAQ).

Belongs to the bacterial ribosomal protein bL27 family.

This Clavibacter michiganensis subsp. michiganensis (strain NCPPB 382) protein is Large ribosomal subunit protein bL27.